Consider the following 139-residue polypeptide: Tol-Pal system protein TolR (139 aa).

The chain crosses the membrane as a helical span at residues Ile15–Ile35.

This sequence belongs to the ExbD/TolR family. As to quaternary structure, the Tol-Pal system is composed of five core proteins: the inner membrane proteins TolA, TolQ and TolR, the periplasmic protein TolB and the outer membrane protein Pal. They form a network linking the inner and outer membranes and the peptidoglycan layer.

The protein resides in the cell inner membrane. Its function is as follows. Part of the Tol-Pal system, which plays a role in outer membrane invagination during cell division and is important for maintaining outer membrane integrity. This is Tol-Pal system protein TolR from Haemophilus influenzae (strain ATCC 51907 / DSM 11121 / KW20 / Rd).